The sequence spans 604 residues: Aspartate--tRNA(Asp/Asn) ligase (604 aa).

E168 serves as a coordination point for L-aspartate. The interval 192 to 195 (QLFK) is aspartate. L-aspartate is bound at residue R214. ATP contacts are provided by residues 214–216 (RDE) and Q223. Residue H446 coordinates L-aspartate. Position 480 (E480) interacts with ATP. L-aspartate is bound at residue R487. 532–535 (GWDR) serves as a coordination point for ATP. A disordered region spans residues 575–604 (LEAGVDARPKPEARAQAGTAGPAAPVADPT). Positions 577 to 587 (AGVDARPKPEA) are enriched in basic and acidic residues. Positions 588–604 (RAQAGTAGPAAPVADPT) are enriched in low complexity.

This sequence belongs to the class-II aminoacyl-tRNA synthetase family. Type 1 subfamily. Homodimer.

The protein localises to the cytoplasm. The enzyme catalyses tRNA(Asx) + L-aspartate + ATP = L-aspartyl-tRNA(Asx) + AMP + diphosphate. Aspartyl-tRNA synthetase with relaxed tRNA specificity since it is able to aspartylate not only its cognate tRNA(Asp) but also tRNA(Asn). Reaction proceeds in two steps: L-aspartate is first activated by ATP to form Asp-AMP and then transferred to the acceptor end of tRNA(Asp/Asn). This chain is Aspartate--tRNA(Asp/Asn) ligase, found in Salinispora arenicola (strain CNS-205).